A 393-amino-acid chain; its full sequence is MVTLGTAGTASARKMMLLGGGELGKEVVIEAQRLGVEVIVVDRYENTPAMQVAHRSYVISMLDTAELRRVVETEKPDYIVPEIEAIATETLLELEKEGFNVVPTARATRLTMDREGIRRLAAEEVGLKTSPYKFADTKEEYLEAIKEIGIPCVIKPVMSSSGKGQSTVKSEADVDRAWDYSQSGGRTGEGRIIVESFVDFDYEITLLTVRHAGGTSYCAPIGHRQDDGDYRESWQPQPMSDAALANAQDYALRITDALGGRGLFGVELFIKGEEVIFSEVSPRPHDTGLVTVISQDLSEFALHVRAILGLPIPAIRQYGPAASSVILSNGKSEAPAFANVDKALEAADTKVLIFGKGECNGVRRLGVALALGEDVTDAKARAIRASSAVEIEY.

N(1)-(5-phospho-beta-D-ribosyl)glycinamide is bound by residues 22 to 23 (EL) and glutamate 82. ATP is bound by residues arginine 114, lysine 155, 160 to 165 (SSGKGQ), 195 to 198 (ESFV), and glutamate 203. In terms of domain architecture, ATP-grasp spans 119 to 308 (RLAAEEVGLK…EFALHVRAIL (190 aa)). Residues glutamate 267 and glutamate 279 each contribute to the Mg(2+) site. N(1)-(5-phospho-beta-D-ribosyl)glycinamide-binding positions include aspartate 286, lysine 356, and 363-364 (RR).

The protein belongs to the PurK/PurT family. Homodimer.

It carries out the reaction N(1)-(5-phospho-beta-D-ribosyl)glycinamide + formate + ATP = N(2)-formyl-N(1)-(5-phospho-beta-D-ribosyl)glycinamide + ADP + phosphate + H(+). The protein operates within purine metabolism; IMP biosynthesis via de novo pathway; N(2)-formyl-N(1)-(5-phospho-D-ribosyl)glycinamide from N(1)-(5-phospho-D-ribosyl)glycinamide (formate route): step 1/1. Its function is as follows. Involved in the de novo purine biosynthesis. Catalyzes the transfer of formate to 5-phospho-ribosyl-glycinamide (GAR), producing 5-phospho-ribosyl-N-formylglycinamide (FGAR). Formate is provided by PurU via hydrolysis of 10-formyl-tetrahydrofolate. This Maridesulfovibrio salexigens (strain ATCC 14822 / DSM 2638 / NCIMB 8403 / VKM B-1763) (Desulfovibrio salexigens) protein is Formate-dependent phosphoribosylglycinamide formyltransferase.